Consider the following 91-residue polypeptide: Small ribosomal subunit protein uS19 (91 aa).

Belongs to the universal ribosomal protein uS19 family.

Protein S19 forms a complex with S13 that binds strongly to the 16S ribosomal RNA. The protein is Small ribosomal subunit protein uS19 of Erythrobacter litoralis (strain HTCC2594).